The following is a 419-amino-acid chain: Tyrosine--tRNA ligase (419 aa).

Tyr-34 provides a ligand contact to L-tyrosine. The 'HIGH' region signature appears at 39–48 (PSGDSMHIGH). The L-tyrosine site is built by Tyr-168 and Gln-172. A 'KMSKS' region motif is present at residues 230 to 234 (KFGKS). Lys-233 lines the ATP pocket. Positions 352 to 418 (ANLVDWLVTL…GKKKYFLVSY (67 aa)) constitute an S4 RNA-binding domain.

This sequence belongs to the class-I aminoacyl-tRNA synthetase family. TyrS type 1 subfamily. As to quaternary structure, homodimer.

It localises to the cytoplasm. The enzyme catalyses tRNA(Tyr) + L-tyrosine + ATP = L-tyrosyl-tRNA(Tyr) + AMP + diphosphate + H(+). Its function is as follows. Catalyzes the attachment of tyrosine to tRNA(Tyr) in a two-step reaction: tyrosine is first activated by ATP to form Tyr-AMP and then transferred to the acceptor end of tRNA(Tyr). This Listeria monocytogenes serotype 4b (strain F2365) protein is Tyrosine--tRNA ligase.